The following is a 540-amino-acid chain: [Co(II) methylated amine-specific corrinoid protein] reductase (540 aa).

4Fe-4S ferredoxin-type domains lie at 471–500 (IILE…IVER) and 504–535 (RIAK…ITKL). Residues Cys480, Cys483, Cys486, Cys490, Cys513, Cys518, Cys521, and Cys525 each contribute to the [4Fe-4S] cluster site.

In terms of assembly, monomer. The cofactor is [4Fe-4S] cluster.

It catalyses the reaction 2 Co(II)-[methylamine-specific corrinoid protein] + AH2 + ATP + H2O = 2 Co(I)-[methylamine-specific corrinoid protein] + A + ADP + phosphate + 3 H(+). It carries out the reaction 2 Co(II)-[dimethylamine-specific corrinoid protein] + AH2 + ATP + H2O = 2 Co(I)-[dimethylamine-specific corrinoid protein] + A + ADP + phosphate + 3 H(+). The catalysed reaction is 2 Co(II)-[trimethylamine-specific corrinoid protein] + AH2 + ATP + H2O = 2 Co(I)-[trimethylamine-specific corrinoid protein] + A + ADP + phosphate + 3 H(+). It functions in the pathway one-carbon metabolism; methanogenesis from methylamine. It participates in one-carbon metabolism; methanogenesis from dimethylamine. Its pathway is one-carbon metabolism; methanogenesis from trimethylamine. Reductase required for the activation of corrinoid-dependent methylamine methyltransferase reactions during methanogenesis. Mediates the ATP-dependent reduction of corrinoid proteins from the inactive cobalt(II) state to the active cobalt(I) state. Acts on the corrinoid proteins involved in methanogenesis from monomethylamine (MMA), dimethylamine (DMA) and trimethylamine (TMA), namely MtmC, MtbC and MttC, respectively. This Methanosarcina barkeri protein is [Co(II) methylated amine-specific corrinoid protein] reductase.